The chain runs to 415 residues: MTDQAEKKHSAFWGVMVIAGTVIGGGMFALPVDLAGAWFFWGAFILIIAWFSMLHSGLLLLEANLNYPVGSSFNTITKDLIGNTWNIISGITVAFVLYILTYAYISANGAIISETISMNLGYHANPRIVGICTAIFVASVLWLSSLAASRITSLFLGLKIISFVIVFGSFFFQVDYSILRDATSSTAGTSYFPYIFMALPVCLASFGFHGNIPSLIICYGKRKDKLIKSVVFGSLLALVIYLFWLYCTMGNIPRESFKAIISSGGNVDSLVKSFLGTKQHGIIEFCLLVFSNLAVASSFFGVTLGLFDYLADLFKIDNSHGGRFKTVLLTFLPPALLYLIFPNGFIYGIGGAGLCATIWAVIIPAVLAIKARKKFPNQMFTVWGGNLIPAIVILFGITVILCWFGNVFNVLPKFG.

The Cytoplasmic segment spans residues 1 to 11 (MTDQAEKKHSA). The helical transmembrane segment at 12 to 32 (FWGVMVIAGTVIGGGMFALPV) threads the bilayer. Residue Asp-33 is a topological domain, periplasmic. A helical transmembrane segment spans residues 34 to 54 (LAGAWFFWGAFILIIAWFSML). The Cytoplasmic portion of the chain corresponds to 55 to 86 (HSGLLLLEANLNYPVGSSFNTITKDLIGNTWN). Residues 87–107 (IISGITVAFVLYILTYAYISA) traverse the membrane as a helical segment. Residues 108–127 (NGAIISETISMNLGYHANPR) lie on the Periplasmic side of the membrane. Residues 128–148 (IVGICTAIFVASVLWLSSLAA) traverse the membrane as a helical segment. The Cytoplasmic segment spans residues 149 to 153 (SRITS). A helical membrane pass occupies residues 154 to 174 (LFLGLKIISFVIVFGSFFFQV). The Periplasmic portion of the chain corresponds to 175–191 (DYSILRDATSSTAGTSY). The helical transmembrane segment at 192 to 212 (FPYIFMALPVCLASFGFHGNI) threads the bilayer. Topologically, residues 213–229 (PSLIICYGKRKDKLIKS) are cytoplasmic. A helical transmembrane segment spans residues 230–250 (VVFGSLLALVIYLFWLYCTMG). Topologically, residues 251 to 286 (NIPRESFKAIISSGGNVDSLVKSFLGTKQHGIIEFC) are periplasmic. Residues 287 to 307 (LLVFSNLAVASSFFGVTLGLF) form a helical membrane-spanning segment. The Cytoplasmic segment spans residues 308–326 (DYLADLFKIDNSHGGRFKT). The helical transmembrane segment at 327-347 (VLLTFLPPALLYLIFPNGFIY) threads the bilayer. Position 348 (Gly-348) is a topological domain, periplasmic. Residues 349–369 (IGGAGLCATIWAVIIPAVLAI) traverse the membrane as a helical segment. Residues 370-387 (KARKKFPNQMFTVWGGNL) are Cytoplasmic-facing. Residues 388–408 (IPAIVILFGITVILCWFGNVF) traverse the membrane as a helical segment. At 409-415 (NVLPKFG) the chain is on the periplasmic side.

This sequence belongs to the amino acid/polyamine transporter 2 family. Mtr/TnaB/TyrP permease subfamily.

The protein localises to the cell inner membrane. Its function is as follows. Involved in tryptophan transport across the cytoplasmic membrane. Plays a role in transporting tryptophan which is to be used catabolically. The protein is Low affinity tryptophan permease (tnaB) of Escherichia coli (strain K12).